Reading from the N-terminus, the 478-residue chain is JmjC domain-containing histone demethylation protein 1 (478 aa).

The segment at 5 to 68 (SESCPLCKVH…IYHCPECVPK (64 aa)) adopts a PHD-type zinc-finger fold. In terms of domain architecture, JmjC spans 217-383 (SDVAKLGVDF…MQLKINEIER (167 aa)). A substrate-binding site is contributed by Thr-266. Fe cation-binding residues include His-269 and Asp-271. Lys-286 contributes to the substrate binding site. His-351 is a Fe cation binding site.

This sequence belongs to the JHDM1 histone demethylase family. Requires Fe(2+) as cofactor.

The protein resides in the nucleus. The catalysed reaction is N(6),N(6)-dimethyl-L-lysyl(36)-[histone H3] + 2 2-oxoglutarate + 2 O2 = L-lysyl(36)-[histone H3] + 2 formaldehyde + 2 succinate + 2 CO2. In terms of biological role, histone demethylase that specifically demethylates 'Lys-36' of histone H3, thereby playing a central role in histone code. In Candida albicans (strain SC5314 / ATCC MYA-2876) (Yeast), this protein is JmjC domain-containing histone demethylation protein 1 (JHD1).